The sequence spans 330 residues: 2-oxoisovalerate dehydrogenase subunit alpha (330 aa).

Residues Phe44, Tyr73, 107-110 (MPGH), and Ser123 contribute to the substrate site. 72–74 (YYR) contributes to the thiamine diphosphate binding site. Residues 123 to 125 (SPV), 153 to 159 (GEGSSNQ), 183 to 187 (NKYAI), and His252 contribute to the thiamine diphosphate site. Mg(2+) contacts are provided by Glu154, Asn183, and Tyr185. The tract at residues 249-272 (LTPHSSDDDDSSYRGREEVEEAKK) is disordered. Residues 259 to 272 (SSYRGREEVEEAKK) are compositionally biased toward basic and acidic residues.

Belongs to the BCKDHA family. Heterotetramer of two alpha and two beta chains. Directly associated with ODBB in the E1 complex. Thiamine diphosphate serves as cofactor.

It catalyses the reaction N(6)-[(R)-lipoyl]-L-lysyl-[protein] + 3-methyl-2-oxobutanoate + H(+) = N(6)-[(R)-S(8)-2-methylpropanoyldihydrolipoyl]-L-lysyl-[protein] + CO2. Functionally, the branched-chain alpha-keto dehydrogenase complex catalyzes the overall conversion of alpha-keto acids to acyl-CoA and CO(2). It contains multiple copies of three enzymatic components: branched-chain alpha-keto acid decarboxylase (E1), lipoamide acyltransferase (E2) and lipoamide dehydrogenase (E3). This Bacillus subtilis (strain 168) protein is 2-oxoisovalerate dehydrogenase subunit alpha (bfmBAA).